We begin with the raw amino-acid sequence, 600 residues long: NAD-dependent malic enzyme, mitochondrial (600 aa).

The N-terminal 68 residues, 1 to 68 (MTRTPFTLSL…NMPIAAPVRT (68 aa)), are a transit peptide targeting the mitochondrion. Residue arginine 93 coordinates fumarate. Tyrosine 138 functions as the Proton donor in the catalytic mechanism. Position 194 (arginine 194) interacts with (S)-malate. Residue arginine 194 participates in NAD(+) binding. The active-site Proton acceptor is lysine 212. Positions 283, 284, and 307 each coordinate a divalent metal cation. The NAD(+) site is built by glycine 344 and alanine 347. Residues asparagine 458 and asparagine 502 each coordinate (S)-malate.

The protein belongs to the malic enzymes family. The cofactor is Mg(2+). Requires Mn(2+) as cofactor.

The protein localises to the mitochondrion matrix. It is found in the cytoplasm. Its subcellular location is the cytosol. It localises to the nucleus. It carries out the reaction (S)-malate + NAD(+) = pyruvate + CO2 + NADH. The catalysed reaction is oxaloacetate + H(+) = pyruvate + CO2. In terms of biological role, NAD-dependent mitochondrial malic enzyme that catalyzes the oxidative decarboxylation of malate to pyruvate. The protein is NAD-dependent malic enzyme, mitochondrial of Cryptococcus neoformans var. grubii serotype A (strain H99 / ATCC 208821 / CBS 10515 / FGSC 9487) (Filobasidiella neoformans var. grubii).